Here is a 106-residue protein sequence, read N- to C-terminus: uncharacterized protein (106 aa).

Positions methionine 1–glycine 25 are cleaved as a signal peptide.

The protein to the N-terminal of the FimA/PapA family of fimbria proteins.

This is an uncharacterized protein from Salmonella typhi.